Here is a 1919-residue protein sequence, read N- to C-terminus: Transcription initiation factor TFIID subunit 1 (1919 aa).

Disordered regions lie at residues 1–25 and 143–169; these read MAESNGKGSHNETSSDDDDEYEDNS and DDEDYDEEEEQEEEQAPVEKSLETEKR. Residues 143-158 show a composition bias toward acidic residues; the sequence is DDEDYDEEEEQEEEQA. Residues 661-737 enclose the Ubiquitin-like domain; the sequence is MKIIVKSLGG…VHLIRTKVHL (77 aa). 3 disordered regions span residues 1287-1314, 1408-1679, and 1726-1746; these read DQKKKKKKMKGVGEGMGSYPPPRPNIAL, MRTN…RPKE, and RSEREEEERQKAKKKKKKKKL. Composition is skewed to basic and acidic residues over residues 1465–1476, 1535–1547, and 1555–1565; these read SVDEALKGDKLS, KPKESKGESERRS, and SRERGESESHK. The span at 1566–1587 shows a compositional bias: polar residues; sequence PSVSGQPLSSTERNQAASSRHT. The span at 1628–1655 shows a compositional bias: basic and acidic residues; sequence RSKEMNDHDMSSLEESPRFESRKTKRMA. Over residues 1661–1671 the composition is skewed to polar residues; it reads QRQQSFRLSEN. Residues 1713 to 1750 are a coiled coil; sequence NEIAEIRRYEEVIRSEREEEERQKAKKKKKKKKLQPEI. The segment covering 1726–1735 has biased composition (basic and acidic residues); it reads RSEREEEERQ. The span at 1736-1745 shows a compositional bias: basic residues; sequence KAKKKKKKKK. The Bromo domain occupies 1794–1911; that stretch reads KRRKKGEVGL…DDYEDQLKEA (118 aa).

The protein belongs to the TAF1 family. Component of the TFIID complex. TFIID is composed of TATA binding protein (TBP) and a number of TBP-associated factors (TAFs) whose MWs range from 14-217 kDa. Interacts with TAF7 and TAF14B, and (via N-terminus) with TBP1 and TBP2. In terms of tissue distribution, expressed in roots, leaves and inflorescences.

The protein localises to the nucleus. Functionally, TAFs are components of the transcription factor IID (TFIID) complex that is essential for mediating regulation of RNA polymerase transcription. Core scaffold of the TFIID complex. The chain is Transcription initiation factor TFIID subunit 1 (TAF1) from Arabidopsis thaliana (Mouse-ear cress).